Consider the following 319-residue polypeptide: GPI-specific phospholipase A2-like PGAP3 (319 aa).

The N-terminal stretch at 1-23 (MAGRTARLVLLAGAAALASGSQG) is a signal peptide. Residues 24-101 (DREPVYRDCV…GKWPFSRFLC (78 aa)) are Lumenal-facing. N40 carries N-linked (GlcNAc...) asparagine glycosylation. A helical membrane pass occupies residues 102-122 (FQEPASAVASFLNGLASLVML). Residues 123–135 (CRYRTSVPASSPM) are Cytoplasmic-facing. A helical transmembrane segment spans residues 136–156 (YPTCVAFAWVSLNAWFWSTVF). Topologically, residues 157-169 (HTRDTDLTEKMDY) are lumenal. The chain crosses the membrane as a helical span at residues 170-190 (FCASTVILHSIYLCCVRTVGL). Over 191–200 (QHPAMASAFR) the chain is Cytoplasmic. Residues 201 to 221 (ALLLLLLTAHVSYLSLIHFDY) form a helical membrane-spanning segment. Topologically, residues 222 to 224 (GYN) are lumenal. Residues 225 to 245 (MAANVAIGLLNAAWWLAWCLW) traverse the membrane as a helical segment. Residues 246–257 (NQRLPHVHKCVA) are Cytoplasmic-facing. Residues 258 to 278 (VVLLLQGLSLLELLDFPPLFW) traverse the membrane as a helical segment. The Lumenal portion of the chain corresponds to 279–281 (VLD). Residues 282–302 (AHAIWHISTIPVHVLFFSFLE) form a helical membrane-spanning segment. The Cytoplasmic segment spans residues 303-319 (DDSLYLLKESEAKVKLD).

Belongs to the PGAP3 family.

Its subcellular location is the golgi apparatus membrane. In terms of biological role, involved in the fatty acid remodeling steps of GPI-anchor maturation where the unsaturated acyl chain at sn-2 of inositol phosphate is replaced by a saturated stearoyl chain. May catalyze the first step of the fatty acid remodeling, by removing the unsaturated acyl chain at sn-2 of inositol phosphate, generating a lyso-GPI intermediate. The fatty acid remodeling steps is critical for the integration of GPI-APs into lipid rafts. The protein is GPI-specific phospholipase A2-like PGAP3 of Bos taurus (Bovine).